Here is a 589-residue protein sequence, read N- to C-terminus: Probable translation initiation factor IF-2 (589 aa).

The tr-type G domain occupies 14 to 231 (LRQPIVCVLG…GLAQRFLESE (218 aa)). Residues 23 to 30 (GHVDHGKT) are G1. Residue 23–30 (GHVDHGKT) coordinates GTP. A G2 region spans residues 48-52 (GITQR). Residues 84–87 (DTPG) form a G3 region. GTP is bound by residues 84-88 (DTPGH) and 138-141 (NKID). Residues 138–141 (NKID) are G4. Residues 206–208 (SAK) are G5.

The protein belongs to the TRAFAC class translation factor GTPase superfamily. Classic translation factor GTPase family. IF-2 subfamily.

Function in general translation initiation by promoting the binding of the formylmethionine-tRNA to ribosomes. Seems to function along with eIF-2. The polypeptide is Probable translation initiation factor IF-2 (Thermoplasma volcanium (strain ATCC 51530 / DSM 4299 / JCM 9571 / NBRC 15438 / GSS1)).